The following is a 100-amino-acid chain: NADH-quinone oxidoreductase subunit K (100 aa).

The next 3 helical transmembrane spans lie at 4–24 (LQHG…GLII), 29–49 (LFML…FVVV), and 60–80 (VMFI…LALL).

The protein belongs to the complex I subunit 4L family. NDH-1 is composed of 13 different subunits. Subunits NuoA, H, J, K, L, M, N constitute the membrane sector of the complex.

Its subcellular location is the cell inner membrane. It carries out the reaction a quinone + NADH + 5 H(+)(in) = a quinol + NAD(+) + 4 H(+)(out). Functionally, NDH-1 shuttles electrons from NADH, via FMN and iron-sulfur (Fe-S) centers, to quinones in the respiratory chain. The immediate electron acceptor for the enzyme in this species is believed to be ubiquinone. Couples the redox reaction to proton translocation (for every two electrons transferred, four hydrogen ions are translocated across the cytoplasmic membrane), and thus conserves the redox energy in a proton gradient. The sequence is that of NADH-quinone oxidoreductase subunit K from Photorhabdus laumondii subsp. laumondii (strain DSM 15139 / CIP 105565 / TT01) (Photorhabdus luminescens subsp. laumondii).